Reading from the N-terminus, the 652-residue chain is MSGQSLTDRITAAQHSVTGSAVSKTVCKATTHEIMGPKKKHLDYLIQCTNEMNVNIPQLADSLFERTTNSSWVVVFKSLITTHHLMVYGNERFIQYLASRNTLFNLSNFLDKSGLQGYDMSTFIRRYSRYLNEKAVSYRQVAFDFTKVKRGADGVMRTMNTEKLLKTVPIIQNQMDALLDFNVNSNELTNGVINAAFMLLFKDAIRLFAAYNEGIINLLEKYFDMKKNQCKEGLDIYKKFLTRMTRISEFLKVAEQVGIDRGDIPDLSQAPSSLLDALEQHLASLEGKKIKDSTAASRATTLSNAVSSLASTGLSLTKVDEREKQAALEEEQARLKALKEQRLKELAKKPHTSLTTAASPVSTSAGGIMTAPAIDIFSTPSSSNSTSKLPNDLLDLQQPTFHPSVHPMSTASQVASTWGDPFSATVDAVDDAIPSLNPFLTKSSGDVHLSISSDVSTFTTRTPTHEMFVGFTPSPVAQPHPSAGLNVDFESVFGNKSTNVIVDSGGFDELGGLLKPTVASQNQNLPVAKLPPSKLVSDDLDSSLANLVGNLGIGNGTTKNDVNWSQPGEKKLTGGSNWQPKVAPTTAWNAATMAPPVMAYPATTPTGMIGYGIPPQMGSVPVMTQPTLIYSQPVMRPPNPFGPVSGAQIQFM.

Residue Ser-2 is modified to N-acetylserine. Residues 14–145 (QHSVTGSAVS…VSYRQVAFDF (132 aa)) form the ENTH domain. A phosphoserine mark is found at Ser-16 and Ser-20. The tract at residues 221-294 (KYFDMKKNQC…LEGKKIKDST (74 aa)) is interaction with PIMREG. A Glycyl lysine isopeptide (Lys-Gly) (interchain with G-Cter in SUMO2) cross-link involves residue Lys-238. A phosphoserine mark is found at Ser-303 and Ser-315. The interval 559–580 (KNDVNWSQPGEKKLTGGSNWQP) is disordered.

The protein belongs to the PICALM/SNAP91 family. As to quaternary structure, binds to clathrin; involves primarily the C-terminal sequences, but the full-length protein is required for full binding capacity. Binds phosphatidylinositol 4,5- bisphosphate. Interacts with PIMREG; this interaction may change the subcellular location into the nucleus. Interacts with AP2A1 (via its alpha-appendage domain). Interacts (via N-terminus) with VAMP2; VAMP3; VAMP7 and VAMP8 (Via N-terminus). Interacts with LC3/MAP1LC3A. As to expression, expressed in all tissues examined.

The protein localises to the cell membrane. The protein resides in the membrane. It localises to the clathrin-coated pit. It is found in the golgi apparatus. Its subcellular location is the cytoplasmic vesicle. The protein localises to the clathrin-coated vesicle. The protein resides in the nucleus. Cytoplasmic adapter protein that plays a critical role in clathrin-mediated endocytosis which is important in processes such as internalization of cell receptors, synaptic transmission or removal of apoptotic cells. Recruits AP-2 and attaches clathrin triskelions to the cytoplasmic side of plasma membrane leading to clathrin-coated vesicles (CCVs) assembly. Furthermore, regulates clathrin-coated vesicle size and maturation by directly sensing and driving membrane curvature. In addition to binding to clathrin, mediates the endocytosis of small R-SNARES (Soluble NSF Attachment Protein REceptors) between plasma membranes and endosomes including VAMP2, VAMP3, VAMP4, VAMP7 or VAMP8. In turn, PICALM-dependent SNARE endocytosis is required for the formation and maturation of autophagic precursors. Modulates thereby autophagy and the turnover of autophagy substrates such as MAPT/TAU or amyloid precursor protein cleaved C-terminal fragment (APP-CTF). This Homo sapiens (Human) protein is Phosphatidylinositol-binding clathrin assembly protein (PICALM).